Here is a 70-residue protein sequence, read N- to C-terminus: Cold shock-like protein CspB (70 aa).

The region spanning 7–67 (GLVKWFDAGK…GQKGPSAVNV (61 aa)) is the CSD domain.

It is found in the cytoplasm. The protein is Cold shock-like protein CspB (cspB) of Yersinia enterocolitica.